The sequence spans 158 residues: C-type natriuretic peptide 3 (158 aa).

An N-terminal signal peptide occupies residues 1-21; it reads MSLNLPGYALFFILLVASSGA. The propeptide occupies 22 to 136; sequence KPAPDLQILE…SKRSRSRYKK (115 aa). The segment at 32–95 is disordered; that stretch reads PPLSSLEEQE…EVQERGRGTG (64 aa). A compositionally biased stretch (basic and acidic residues) spans 47-64; it reads VQEKVQEQQEEVQEKVQE. The span at 65–86 shows a compositional bias: acidic residues; that stretch reads QQEEVQEQQEEVQEQQEEQQEE. Cysteine 142 and cysteine 158 form a disulfide bridge.

This sequence belongs to the natriuretic peptide family.

Its subcellular location is the secreted. Exhibits natriuretic and vasodepressant activity. Has cGMP-stimulating activity. May help to regulate body fluid homeostasis in a variety of aquatic environments. This Takifugu rubripes (Japanese pufferfish) protein is C-type natriuretic peptide 3.